Here is a 409-residue protein sequence, read N- to C-terminus: Glycosaminoglycan xylosylkinase (409 aa).

Residues 1-6 (MKLKQR) lie on the Cytoplasmic side of the membrane. Residues 7–25 (VVLLAILLVIFIFTKVFLI) traverse the membrane as a helical; Signal-anchor for type II membrane protein segment. Residues 26–409 (DNLDTSAANR…VEDRMPLSHL (384 aa)) lie on the Lumenal side of the membrane. ATP is bound by residues glutamine 107 and lysine 123. Aspartate 142 contributes to the Mn(2+) binding site. Asparagine 193 is a glycosylation site (N-linked (GlcNAc...) asparagine). Intrachain disulfides connect cysteine 196/cysteine 211 and cysteine 201/cysteine 204. ATP is bound at residue 222–225 (TLWL). Intrachain disulfides connect cysteine 257-cysteine 331 and cysteine 332-cysteine 389. Aspartate 289 is a catalytic residue. 2 residues coordinate ATP: glutamate 294 and aspartate 309. Aspartate 309 lines the Mn(2+) pocket.

It belongs to the FAM20 family. Mn(2+) serves as cofactor. In terms of tissue distribution, widely expressed. Strongly expressed in pancreas, spleen and fetal liver.

The protein localises to the golgi apparatus membrane. It catalyses the reaction 3-O-(beta-D-galactosyl-(1-&gt;3)-beta-D-galactosyl-(1-&gt;4)-beta-D-xylosyl)-L-seryl-[protein] + ATP = 3-O-(beta-D-galactosyl-(1-&gt;3)-beta-D-galactosyl-(1-&gt;4)-beta-D-2-O-phosphoxylosyl)-L-seryl-[protein] + ADP + H(+). Responsible for the 2-O-phosphorylation of xylose in the glycosaminoglycan-protein linkage region of proteoglycans thereby regulating the amount of mature GAG chains. Sulfated glycosaminoglycans (GAGs), including heparan sulfate and chondroitin sulfate, are synthesized on the so-called common GAG-protein linkage region (GlcUAbeta1-3Galbeta1-3Galbeta1-4Xylbeta1-O-Ser) of core proteins, which is formed by the stepwise addition of monosaccharide residues by the respective specific glycosyltransferases. Xylose 2-O-phosphorylation may influence the catalytic activity of B3GAT3 (GlcAT-I) which completes the precursor tetrasaccharide of GAG-protein linkage regions on which the repeating disaccharide region is synthesized. The polypeptide is Glycosaminoglycan xylosylkinase (Homo sapiens (Human)).